A 225-amino-acid chain; its full sequence is UPF0758 protein BAV2405 (225 aa).

One can recognise an MPN domain in the interval 103 to 225 (AMKHPEEVRR…ALSMAERGLI (123 aa)). Residues H174, H176, and D187 each contribute to the Zn(2+) site. Positions 174–187 (HNHPSGNPQPSAAD) match the JAMM motif motif.

Belongs to the UPF0758 family.

The polypeptide is UPF0758 protein BAV2405 (Bordetella avium (strain 197N)).